Reading from the N-terminus, the 398-residue chain is ATP-dependent RNA helicase eIF4A (398 aa).

The short motif at D25–Q53 is the Q motif element. The Helicase ATP-binding domain occupies I56–I226. A69–T76 lines the ATP pocket. A DEAD box motif is present at residues D174 to D177. One can recognise a Helicase C-terminal domain in the interval G237 to I398.

It belongs to the DEAD box helicase family. eIF4A subfamily. Component of the eIF4F complex, which composition varies with external and internal environmental conditions. It is composed of at least eIF4A, eIF4E and eIF4G.

It is found in the cytoplasm. It catalyses the reaction ATP + H2O = ADP + phosphate + H(+). Its function is as follows. ATP-dependent RNA helicase which is a subunit of the eIF4F complex involved in cap recognition and is required for mRNA binding to ribosome. In the current model of translation initiation, eIF4A unwinds RNA secondary structures in the 5'-UTR of mRNAs which is necessary to allow efficient binding of the small ribosomal subunit, and subsequent scanning for the initiator codon. In Sclerotinia sclerotiorum (strain ATCC 18683 / 1980 / Ss-1) (White mold), this protein is ATP-dependent RNA helicase eIF4A (tif1).